Reading from the N-terminus, the 530-residue chain is UDP-glucuronosyltransferase 2B15 (530 aa).

The first 23 residues, 1–23, serve as a signal peptide directing secretion; that stretch reads MSGKWISALLLLQISFCFKSGNC. Asn-316 carries N-linked (GlcNAc...) asparagine glycosylation. The chain crosses the membrane as a helical span at residues 494 to 510; sequence VIGFLLSCVAVTVVLAL.

Belongs to the UDP-glycosyltransferase family. In terms of processing, N-glycosylated. As to expression, liver. Lower levels seen in the kidney and testis.

The protein localises to the endoplasmic reticulum membrane. It catalyses the reaction glucuronate acceptor + UDP-alpha-D-glucuronate = acceptor beta-D-glucuronoside + UDP + H(+). The enzyme catalyses 17alpha-estradiol + UDP-alpha-D-glucuronate = 17alpha-estradiol 3-O-(beta-D-glucuronate) + UDP + H(+). It carries out the reaction 16alpha,17alpha-estriol + UDP-alpha-D-glucuronate = 16alpha,17alpha-estriol 3-O-(beta-D-glucuronate) + UDP + H(+). The catalysed reaction is 17beta-hydroxy-5alpha-androstan-3-one + UDP-alpha-D-glucuronate = 5alpha-dihydrotestosterone 17-O-(beta-D-glucuronate) + UDP + H(+). UDP-glucuronosyltransferase (UGT) that catalyzes phase II biotransformation reactions in which lipophilic substrates are conjugated with glucuronic acid to increase the metabolite's water solubility, thereby facilitating excretion into either the urine or bile. Essential for the elimination and detoxification of drugs, xenobiotics and endogenous compounds. Catalyzes the glucuronidation of endogenous steroid hormones such as androgens (testosterone, androsterone) and estrogens (estradiol, epiestradiol, estriol, catechol estrogens). Displays glucuronidation activity toward several classes of xenoblotic substrates, including phenolic compounds (eugenol, 4-nitrophenol, 4-hydroxybiphenyl) and phenylpropanoids (naringenin, coumarins). Catalyzes the glucuronidation of monoterpenoid alcohols such as borneol, menthol and isomenthol, a class of natural compounds used in essential oils. The protein is UDP-glucuronosyltransferase 2B15 of Rattus norvegicus (Rat).